The following is a 149-amino-acid chain: 3-dehydroquinate dehydratase (149 aa).

Catalysis depends on tyrosine 23, which acts as the Proton acceptor. The substrate site is built by asparagine 74, histidine 80, and aspartate 87. The active-site Proton donor is histidine 100. Substrate contacts are provided by residues 101–102 and arginine 111; that span reads LS.

It belongs to the type-II 3-dehydroquinase family. Homododecamer.

It catalyses the reaction 3-dehydroquinate = 3-dehydroshikimate + H2O. It participates in metabolic intermediate biosynthesis; chorismate biosynthesis; chorismate from D-erythrose 4-phosphate and phosphoenolpyruvate: step 3/7. Catalyzes a trans-dehydration via an enolate intermediate. This is 3-dehydroquinate dehydratase from Ruegeria pomeroyi (strain ATCC 700808 / DSM 15171 / DSS-3) (Silicibacter pomeroyi).